The sequence spans 425 residues: Serine--tRNA ligase (425 aa).

232-234 (TSE) is a binding site for L-serine. Residues 263 to 265 (RRE) and V279 contribute to the ATP site. An L-serine-binding site is contributed by E286. 350 to 353 (EVVS) lines the ATP pocket. T387 lines the L-serine pocket.

Belongs to the class-II aminoacyl-tRNA synthetase family. Type-1 seryl-tRNA synthetase subfamily. Homodimer. The tRNA molecule binds across the dimer.

Its subcellular location is the cytoplasm. The enzyme catalyses tRNA(Ser) + L-serine + ATP = L-seryl-tRNA(Ser) + AMP + diphosphate + H(+). The catalysed reaction is tRNA(Sec) + L-serine + ATP = L-seryl-tRNA(Sec) + AMP + diphosphate + H(+). Its pathway is aminoacyl-tRNA biosynthesis; selenocysteinyl-tRNA(Sec) biosynthesis; L-seryl-tRNA(Sec) from L-serine and tRNA(Sec): step 1/1. In terms of biological role, catalyzes the attachment of serine to tRNA(Ser). Is also able to aminoacylate tRNA(Sec) with serine, to form the misacylated tRNA L-seryl-tRNA(Sec), which will be further converted into selenocysteinyl-tRNA(Sec). The protein is Serine--tRNA ligase of Methanocella arvoryzae (strain DSM 22066 / NBRC 105507 / MRE50).